The chain runs to 297 residues: HTH-type transcriptional regulator ArgP (297 aa).

The HTH lysR-type domain occupies 4–60 (PDYRTLQALDAVIRERGFERAAQKLCITQSAVSQRIKQLENMFGQPLLVRTVPPRPT). Residues 21-40 (FERAAQKLCITQSAVSQRIK) constitute a DNA-binding region (H-T-H motif).

It belongs to the LysR transcriptional regulatory family. In terms of assembly, homodimer.

Controls the transcription of genes involved in arginine and lysine metabolism. The sequence is that of HTH-type transcriptional regulator ArgP from Enterobacter sp. (strain 638).